The primary structure comprises 100 residues: Osteocalcin (100 aa).

An N-terminal signal peptide occupies residues 1 to 23 (MRALTLLALLALAALCIAGQAGA). A propeptide spanning residues 24–51 (KPSGAESSKGAAFVSKQEGSEVVKRPRR) is cleaved from the precursor. Residues 52–98 (YLYQWLGAPVPYPDTLEPRREVCELNPDCDELADHIGFQEAYRRFYG) form the Gla domain. 4 residues coordinate Ca(2+): E68, E72, E75, and D81. 3 positions are modified to 4-carboxyglutamate: E68, E72, and E75. Residues C74 and C80 are joined by a disulfide bond.

The protein belongs to the osteocalcin/matrix Gla protein family. Post-translationally, gamma-carboxyglutamate residues are formed by vitamin K dependent carboxylation by GGCX. These residues are essential for the binding of calcium. Decarboxylation promotes the hormone activity.

The protein resides in the secreted. In terms of biological role, the carboxylated form is one of the main organic components of the bone matrix, which constitutes 1-2% of the total bone protein: it acts as a negative regulator of bone formation and is required to limit bone formation without impairing bone resorption or mineralization. The carboxylated form binds strongly to apatite and calcium. Its function is as follows. The uncarboxylated form acts as a hormone secreted by osteoblasts, which regulates different cellular processes, such as energy metabolism, male fertility and brain development. Regulates of energy metabolism by acting as a hormone favoring pancreatic beta-cell proliferation, insulin secretion and sensitivity and energy expenditure. Uncarboxylated osteocalcin hormone also promotes testosterone production in the testes: acts as a ligand for G protein-coupled receptor GPRC6A at the surface of Leydig cells, initiating a signaling response that promotes the expression of enzymes required for testosterone synthesis in a CREB-dependent manner. Also acts as a regulator of brain development: osteocalcin hormone crosses the blood-brain barrier and acts as a ligand for GPR158 on neurons, initiating a signaling response that prevents neuronal apoptosis in the hippocampus, favors the synthesis of all monoamine neurotransmitters and inhibits that of gamma-aminobutyric acid (GABA). Osteocalcin also crosses the placenta during pregnancy and maternal osteocalcin is required for fetal brain development. The polypeptide is Osteocalcin (Pan troglodytes (Chimpanzee)).